Here is a 182-residue protein sequence, read N- to C-terminus: Peptidyl-prolyl cis-trans isomerase ssp-1 (182 aa).

Residues 7–41 (TGLPEDWEVRHSQSKNLPYYFNSATKTSRWEPPSG) enclose the WW domain. The 112-residue stretch at 71 to 182 (QGKIRCAHLL…SGLHLIERLE (112 aa)) folds into the PpiC domain.

It carries out the reaction [protein]-peptidylproline (omega=180) = [protein]-peptidylproline (omega=0). Functionally, site-specific PPIase with respect to the amino acid N-terminal to the proline residue. Peptides with glutamate, phosphoserine, or phosphothreonine in the -1 position are the best substrates. It is not only able to isomerize small peptides but is also active in protein folding. This is Peptidyl-prolyl cis-trans isomerase ssp-1 (ssp-1) from Neurospora crassa (strain ATCC 24698 / 74-OR23-1A / CBS 708.71 / DSM 1257 / FGSC 987).